A 208-amino-acid chain; its full sequence is LexA repressor (208 aa).

Positions 28–48 form a DNA-binding region, H-T-H motif; it reads RAEIARELGFRSANAAEEHLK. Residues Ser125 and Lys162 each act as for autocatalytic cleavage activity in the active site.

This sequence belongs to the peptidase S24 family. In terms of assembly, homodimer.

It catalyses the reaction Hydrolysis of Ala-|-Gly bond in repressor LexA.. Represses a number of genes involved in the response to DNA damage (SOS response), including recA and lexA. In the presence of single-stranded DNA, RecA interacts with LexA causing an autocatalytic cleavage which disrupts the DNA-binding part of LexA, leading to derepression of the SOS regulon and eventually DNA repair. This Aliivibrio fischeri (strain ATCC 700601 / ES114) (Vibrio fischeri) protein is LexA repressor.